A 169-amino-acid polypeptide reads, in one-letter code: MSDHKRAVLAGGCFWGMQDLIRKQPGVVSTRVGYTGGQNDHPTYRNHPGHAEAIEIVYDPAQTDYRALLEFFFQIHDPTTKNRQGNDIGTSYRSEIFYVDEEQRQIALDTIADVDASGLWPGKVVTEVSPAPDFWEAEPEHQDYLERYPTGYTCHFPRPGWKLPKRAEV.

The active site involves cysteine 13.

Belongs to the MsrA Met sulfoxide reductase family.

It catalyses the reaction L-methionyl-[protein] + [thioredoxin]-disulfide + H2O = L-methionyl-(S)-S-oxide-[protein] + [thioredoxin]-dithiol. It carries out the reaction [thioredoxin]-disulfide + L-methionine + H2O = L-methionine (S)-S-oxide + [thioredoxin]-dithiol. Has an important function as a repair enzyme for proteins that have been inactivated by oxidation. Catalyzes the reversible oxidation-reduction of methionine sulfoxide in proteins to methionine. In Mycolicibacterium gilvum (strain PYR-GCK) (Mycobacterium gilvum (strain PYR-GCK)), this protein is Peptide methionine sulfoxide reductase MsrA.